A 131-amino-acid chain; its full sequence is Predicted GPI-anchored protein 26 (131 aa).

An N-terminal signal peptide occupies residues Met1–Ala18. N-linked (GlcNAc...) asparagine glycosylation is found at Asn22 and Asn104. A lipid anchor (GPI-anchor amidated glycine) is attached at Gly110. The propeptide at Ala111–Met131 is removed in mature form.

Its subcellular location is the cell membrane. In terms of biological role, GPI-anchored protein involved in proper cell wall integrity. Does not seem to be directly involved in the synthesis of the cell wall. Required for normal virulence in a mouse model of disseminated candidiasis. This is Predicted GPI-anchored protein 26 (PGA26) from Candida albicans (strain SC5314 / ATCC MYA-2876) (Yeast).